A 268-amino-acid chain; its full sequence is Urease accessory protein UreD (268 aa).

Belongs to the UreD family. In terms of assembly, ureD, UreF and UreG form a complex that acts as a GTP-hydrolysis-dependent molecular chaperone, activating the urease apoprotein by helping to assemble the nickel containing metallocenter of UreC. The UreE protein probably delivers the nickel.

The protein localises to the cytoplasm. Its function is as follows. Required for maturation of urease via the functional incorporation of the urease nickel metallocenter. This chain is Urease accessory protein UreD, found in Lysinibacillus sphaericus (strain C3-41).